The sequence spans 340 residues: Speriolin-like protein (340 aa).

Disordered stretches follow at residues 42-73 (GGGH…RFTS) and 94-135 (APLS…KLSP). Residue S60 is modified to Phosphoserine. Basic and acidic residues predominate over residues 123 to 133 (PHSHRGTDRKL). S134 carries the phosphoserine modification.

The protein belongs to the speriolin family.

It localises to the cytoplasm. This chain is Speriolin-like protein (SPATC1L), found in Homo sapiens (Human).